The chain runs to 625 residues: 1-deoxy-D-xylulose-5-phosphate synthase (625 aa).

Thiamine diphosphate is bound by residues histidine 74 and 115–117 (GHS). Aspartate 146 is a binding site for Mg(2+). Thiamine diphosphate is bound by residues 147–148 (GA), asparagine 175, tyrosine 286, and glutamate 367. Asparagine 175 serves as a coordination point for Mg(2+).

The protein belongs to the transketolase family. DXPS subfamily. In terms of assembly, homodimer. Mg(2+) serves as cofactor. The cofactor is thiamine diphosphate.

It carries out the reaction D-glyceraldehyde 3-phosphate + pyruvate + H(+) = 1-deoxy-D-xylulose 5-phosphate + CO2. It participates in metabolic intermediate biosynthesis; 1-deoxy-D-xylulose 5-phosphate biosynthesis; 1-deoxy-D-xylulose 5-phosphate from D-glyceraldehyde 3-phosphate and pyruvate: step 1/1. Its function is as follows. Catalyzes the acyloin condensation reaction between C atoms 2 and 3 of pyruvate and glyceraldehyde 3-phosphate to yield 1-deoxy-D-xylulose-5-phosphate (DXP). In Lachnoclostridium phytofermentans (strain ATCC 700394 / DSM 18823 / ISDg) (Clostridium phytofermentans), this protein is 1-deoxy-D-xylulose-5-phosphate synthase.